A 516-amino-acid chain; its full sequence is Probable inorganic phosphate transporter 1-6 (516 aa).

A2 is subject to N-acetylalanine. The Cytoplasmic segment spans residues 2–25 (ANEEQGSILKALDVAKTQWYHVTA). A helical transmembrane segment spans residues 26–46 (VVVSGMGFFTDSYDLFVISLI). Over 47–71 (TKLLGRIYYQVPGSSSPGSLPDGIS) the chain is Extracellular. Residues 72–92 (AAVSGVAFAGTFIGQIFFGCL) form a helical membrane-spanning segment. Residues 93–100 (GDKLGRKR) are Cytoplasmic-facing. Residues 101 to 121 (VYGLTLLIMTICSICSGLSLG) traverse the membrane as a helical segment. Over 122–132 (RDPKTVMVTLC) the chain is Extracellular. A helical membrane pass occupies residues 133–153 (FFRFWLGFGIGGDYPLSATIM). The Cytoplasmic portion of the chain corresponds to 154–162 (SEYSNKRTR). The helical transmembrane segment at 163–183 (GAFIAAVFGMQGIGILAAGAV) threads the bilayer. Topologically, residues 184 to 212 (SLLVSAVFESKFPSRAYILDGAASTVPQA) are extracellular. Residues 213–233 (DYVWRIILMVGALPALLTYYW) form a helical membrane-spanning segment. The Cytoplasmic portion of the chain corresponds to 234 to 293 (RMKMPETARYTALVSKNAEQAALDMTKVLNVDIEASAAKNDQARVSSDEFGLFSMKFLRR). A helical membrane pass occupies residues 294 to 314 (HGLHLLGTASTWFLLDIAFYS). Over 315 to 349 (QNLFQKDIFTTIGWLPSAKTMNAIQELYMIAKAQT) the chain is Extracellular. Residues 350–370 (IIACCSTVPGYFFTVGFIDYM) traverse the membrane as a helical segment. The Cytoplasmic portion of the chain corresponds to 371 to 374 (GRKK). A helical transmembrane segment spans residues 375 to 395 (IQIMGFAMMTIFMLSLAIPYH). Residues 396–403 (HWTLPANR) lie on the Extracellular side of the membrane. The chain crosses the membrane as a helical span at residues 404-424 (IGFVVLYSFTFFFSNFGPNAT). The Cytoplasmic portion of the chain corresponds to 425 to 442 (TFIVPAEIFPARIRSTCH). The chain crosses the membrane as a helical span at residues 443–463 (GISAASGKAGAMVGSFGFSAL). At 464–471 (VKALGMSN) the chain is on the extracellular side. A helical membrane pass occupies residues 472-492 (TLYIMAGINLLGLLLTFTIPE). Residues 493–516 (TNGKSLEELSGETEPEKIKEKIVV) are Cytoplasmic-facing.

This sequence belongs to the major facilitator superfamily. Phosphate:H(+) symporter (TC 2.A.1.9) family. Expressed in anthers, tapetumand mature pollen and, to a lower extent, in hydathodes and vascular tissues of cotyledons of flowering plants.

The protein resides in the membrane. In terms of biological role, high-affinity transporter for external inorganic phosphate. The protein is Probable inorganic phosphate transporter 1-6 (PHT1-6) of Arabidopsis thaliana (Mouse-ear cress).